The primary structure comprises 396 residues: L-lactate dehydrogenase (396 aa).

Residues 1 to 380 (MIISAASDYR…SGDSLVQELG (380 aa)) form the FMN hydroxy acid dehydrogenase domain. Position 24 (Y24) interacts with substrate. Residues S106 and Q127 each contribute to the FMN site. Residue Y129 coordinates substrate. Residue T155 participates in FMN binding. R164 contacts substrate. An FMN-binding site is contributed by K251. H275 functions as the Proton acceptor in the catalytic mechanism. R278 is a binding site for substrate. Residue 306 to 330 (DSGIRNGLDVVRMIALGADTVLLGR) participates in FMN binding.

It belongs to the FMN-dependent alpha-hydroxy acid dehydrogenase family. FMN is required as a cofactor.

The protein localises to the cell inner membrane. It catalyses the reaction (S)-lactate + A = pyruvate + AH2. In terms of biological role, catalyzes the conversion of L-lactate to pyruvate. Is coupled to the respiratory chain. This chain is L-lactate dehydrogenase, found in Salmonella heidelberg (strain SL476).